The primary structure comprises 303 residues: N-acetyl-D-glucosamine kinase (303 aa).

ATP contacts are provided by residues 4–11 (GFDIGGTK) and 133–140 (GVGGGLVL). Residues His-157, Cys-177, Cys-179, and Cys-184 each contribute to the Zn(2+) site.

It belongs to the ROK (NagC/XylR) family. NagK subfamily.

The catalysed reaction is N-acetyl-D-glucosamine + ATP = N-acetyl-D-glucosamine 6-phosphate + ADP + H(+). It participates in cell wall biogenesis; peptidoglycan recycling. In terms of biological role, catalyzes the phosphorylation of N-acetyl-D-glucosamine (GlcNAc) derived from cell-wall degradation, yielding GlcNAc-6-P. This is N-acetyl-D-glucosamine kinase from Salmonella dublin (strain CT_02021853).